The primary structure comprises 300 residues: Urease accessory protein UreD (300 aa).

This sequence belongs to the UreD family. As to quaternary structure, ureD, UreF and UreG form a complex that acts as a GTP-hydrolysis-dependent molecular chaperone, activating the urease apoprotein by helping to assemble the nickel containing metallocenter of UreC. The UreE protein probably delivers the nickel.

Its subcellular location is the cytoplasm. In terms of biological role, required for maturation of urease via the functional incorporation of the urease nickel metallocenter. The polypeptide is Urease accessory protein UreD (Prochlorococcus marinus (strain MIT 9312)).